The sequence spans 266 residues: Ciliary microtubule inner protein 4 (266 aa).

Composition is skewed to polar residues over residues 1-15 and 24-38; these read MELS…LTRT and QDMN…SLDN. A disordered region spans residues 1–124; that stretch reads MELSHRQGTT…SPEQRTVPLS (124 aa). Residues 47 to 63 show a composition bias toward low complexity; it reads LSQSPLGSSLGQGYLET. Basic and acidic residues predominate over residues 81-102; that stretch reads HPEDLKKGASRSSSRDARETFR.

As to expression, only detected in testis, in the spermatids and sperm within the seminiferous tubules (at protein level).

Its subcellular location is the cytoplasmic vesicle. The protein localises to the secretory vesicle. It is found in the acrosome. The protein resides in the cell projection. It localises to the cilium. Its subcellular location is the flagellum. Seems to be associated with spermiogenesis but is not essential for sperm development and male fertility. This chain is Ciliary microtubule inner protein 4 (Cimip4), found in Mus musculus (Mouse).